A 122-amino-acid polypeptide reads, in one-letter code: Large ribosomal subunit protein uL14 (122 aa).

Belongs to the universal ribosomal protein uL14 family. In terms of assembly, part of the 50S ribosomal subunit. Forms a cluster with proteins L3 and L19. In the 70S ribosome, L14 and L19 interact and together make contacts with the 16S rRNA in bridges B5 and B8.

Functionally, binds to 23S rRNA. Forms part of two intersubunit bridges in the 70S ribosome. This Alkaliphilus oremlandii (strain OhILAs) (Clostridium oremlandii (strain OhILAs)) protein is Large ribosomal subunit protein uL14.